Here is a 250-residue protein sequence, read N- to C-terminus: ATP synthase subunit a (250 aa).

Transmembrane regions (helical) follow at residues 29-49 (ASLF…FATS), 84-104 (FFPL…LGMF), 114-134 (IIVT…YGFY), 143-163 (VFVP…IEII), 193-213 (FVAS…LPLI), and 216-236 (VALT…FAVL).

The protein belongs to the ATPase A chain family. In terms of assembly, F-type ATPases have 2 components, CF(1) - the catalytic core - and CF(0) - the membrane proton channel. CF(1) has five subunits: alpha(3), beta(3), gamma(1), delta(1), epsilon(1). CF(0) has three main subunits: a(1), b(2) and c(9-12). The alpha and beta chains form an alternating ring which encloses part of the gamma chain. CF(1) is attached to CF(0) by a central stalk formed by the gamma and epsilon chains, while a peripheral stalk is formed by the delta and b chains.

It localises to the cell inner membrane. In terms of biological role, key component of the proton channel; it plays a direct role in the translocation of protons across the membrane. The polypeptide is ATP synthase subunit a (Rhizobium leguminosarum bv. trifolii (strain WSM2304)).